A 239-amino-acid chain; its full sequence is tRNA (guanine-N(1)-)-methyltransferase (239 aa).

S-adenosyl-L-methionine is bound by residues Gly-112 and 132 to 137 (IGDYVL).

The protein belongs to the RNA methyltransferase TrmD family. Homodimer.

It localises to the cytoplasm. The catalysed reaction is guanosine(37) in tRNA + S-adenosyl-L-methionine = N(1)-methylguanosine(37) in tRNA + S-adenosyl-L-homocysteine + H(+). In terms of biological role, specifically methylates guanosine-37 in various tRNAs. The sequence is that of tRNA (guanine-N(1)-)-methyltransferase from Rhodospirillum rubrum (strain ATCC 11170 / ATH 1.1.1 / DSM 467 / LMG 4362 / NCIMB 8255 / S1).